Consider the following 572-residue polypeptide: DnaJ protein ERDJ3A (572 aa).

The first 23 residues, 1–23 (MVRTRLAISVVLVSTLLLLNVKA), serve as a signal peptide directing secretion. The J domain occupies 27–91 (DPYKVLGVSK…EKRKNYDLYG (65 aa)). Positions 394 to 423 (ITVKNLKSAVQELGKLLEGLEKKNKKVSSK) form a coiled coil. Positions 419 to 439 (KVSSKSQAGQAPNESSEKIPL) are disordered. Polar residues predominate over residues 422–432 (SKSQAGQAPNE). N431 is a glycosylation site (N-linked (GlcNAc...) asparagine).

Interacts with BIP1 and BIP3. The interaction with BIP1 and BIP3 activates the ATPase enzyme activities of BIP1 and BIP3. Post-translationally, not N-glycosylated. Expressed in roots, leaves, stems, flowers, mature pollen grains and growing pollen tubes.

Its subcellular location is the endoplasmic reticulum lumen. Functionally, regulates protein folding in the endoplasmic reticulum (ER) lumen. Functions probably as a co-molecular chaperone that is required for normal growth of pollen tubes under high-temperature stress. This chain is DnaJ protein ERDJ3A (ERDJ3A), found in Arabidopsis thaliana (Mouse-ear cress).